Reading from the N-terminus, the 131-residue chain is Holo-[acyl-carrier-protein] synthase (131 aa).

The Mg(2+) site is built by aspartate 8 and glutamate 59.

Belongs to the P-Pant transferase superfamily. AcpS family. Mg(2+) serves as cofactor.

It localises to the cytoplasm. The enzyme catalyses apo-[ACP] + CoA = holo-[ACP] + adenosine 3',5'-bisphosphate + H(+). Transfers the 4'-phosphopantetheine moiety from coenzyme A to a Ser of acyl-carrier-protein. The polypeptide is Holo-[acyl-carrier-protein] synthase (Rickettsia rickettsii (strain Sheila Smith)).